A 606-amino-acid polypeptide reads, in one-letter code: Chaperone protein DnaK (606 aa).

Thr174 is modified (phosphothreonine; by autocatalysis). The tract at residues 576-606 (QAAGSANPGGSQGTSQGNVYEADYKVEDDNK) is disordered. Positions 597–606 (ADYKVEDDNK) are enriched in basic and acidic residues.

Belongs to the heat shock protein 70 family.

Functionally, acts as a chaperone. The sequence is that of Chaperone protein DnaK from Caldanaerobacter subterraneus subsp. tengcongensis (strain DSM 15242 / JCM 11007 / NBRC 100824 / MB4) (Thermoanaerobacter tengcongensis).